The primary structure comprises 79 residues: Sulfur carrier protein TusA (79 aa).

Cysteine 17 functions as the Cysteine persulfide intermediate in the catalytic mechanism.

This sequence belongs to the sulfur carrier protein TusA family.

The protein localises to the cytoplasm. Its function is as follows. Sulfur carrier protein which probably makes part of a sulfur-relay system. The sequence is that of Sulfur carrier protein TusA from Pseudoalteromonas translucida (strain TAC 125).